Consider the following 317-residue polypeptide: Transcription initiation factor IIB 3 (317 aa).

A compositionally biased stretch (basic and acidic residues) spans 1–14 (MERATREREKEQRE). A disordered region spans residues 1 to 25 (MERATREREKEQREQAQTNDEAQQC). The TFIIB-type zinc-finger motif lies at 21-50 (EAQQCPECNSANVITDQSERVCEDCGLVLE). 4 residues coordinate Zn(2+): C25, C28, C42, and C45. Residues 62–83 (AFNSSERDQKSRVGAPTTKTMH) form a disordered region. A run of 2 repeats spans residues 136–219 (SEID…AQEL) and 230–311 (EYLP…EQIE).

It belongs to the TFIIB family.

Functionally, stabilizes TBP binding to an archaeal box-A promoter. Also responsible for recruiting RNA polymerase II to the pre-initiation complex (DNA-TBP-TFIIB). The sequence is that of Transcription initiation factor IIB 3 from Halobacterium salinarum (strain ATCC 700922 / JCM 11081 / NRC-1) (Halobacterium halobium).